A 394-amino-acid polypeptide reads, in one-letter code: Elongation factor Tu (394 aa).

The tr-type G domain occupies 10–204; it reads KPHVNVGTIG…ALDTYIPEPE (195 aa). The segment at 19 to 26 is G1; the sequence is GHVDHGKT. 19-26 is a GTP binding site; sequence GHVDHGKT. Mg(2+) is bound at residue T26. The tract at residues 60–64 is G2; that stretch reads GITIN. Residues 81 to 84 are G3; sequence DCPG. Residues 81–85 and 136–139 each bind GTP; these read DCPGH and NKCD. The tract at residues 136-139 is G4; it reads NKCD. Residues 174–176 form a G5 region; the sequence is SAL.

The protein belongs to the TRAFAC class translation factor GTPase superfamily. Classic translation factor GTPase family. EF-Tu/EF-1A subfamily. As to quaternary structure, monomer.

The protein localises to the cytoplasm. It carries out the reaction GTP + H2O = GDP + phosphate + H(+). In terms of biological role, GTP hydrolase that promotes the GTP-dependent binding of aminoacyl-tRNA to the A-site of ribosomes during protein biosynthesis. This is Elongation factor Tu from Shewanella halifaxensis (strain HAW-EB4).